We begin with the raw amino-acid sequence, 397 residues long: Zinc finger transcription factor family protein 30 (397 aa).

Residues methionine 1 to valine 40 are disordered. Over residues threonine 14–asparagine 27 the composition is skewed to acidic residues. 3 C2H2-type zinc fingers span residues phenylalanine 51–histidine 74, tyrosine 78–histidine 102, and tyrosine 107–histidine 125.

The protein resides in the nucleus. The sequence is that of Zinc finger transcription factor family protein 30 (ztf-30) from Caenorhabditis elegans.